A 449-amino-acid chain; its full sequence is GTP-binding protein A (449 aa).

Residues 1 to 77 (MFNINPYKSK…LSSKTENSLS (77 aa)) are disordered. 2 stretches are compositionally biased toward low complexity: residues 8-46 (KSKT…SSSS) and 67-77 (SLSSKTENSLS). Positions 149–386 (QNECNVLLLG…FMGHLRAKNK (238 aa)) constitute an AIG1-type G domain. The segment at 158-165 (GRTGVGKS) is G1. 158-165 (GRTGVGKS) provides a ligand contact to GTP. A G2 region spans residues 183-187 (SCTQD). The segment at 204-207 (DTPG) is G3. Residues 275 to 278 (TYAN) are G4. The interval 336–338 (ENS) is G5.

It belongs to the TRAFAC class TrmE-Era-EngA-EngB-Septin-like GTPase superfamily. AIG1/Toc34/Toc159-like paraseptin GTPase family. IAN subfamily.

This Dictyostelium discoideum (Social amoeba) protein is GTP-binding protein A (gtpA).